The following is a 462-amino-acid chain: G-patch domain and KOW motifs-containing protein homolog 1 (462 aa).

Disordered stretches follow at residues 1–26 (MVEQ…KREE) and 182–218 (LKLP…EEEK). One can recognise a G-patch domain in the interval 154–202 (IESFGLAILRGCNWKDGDGIGKNPQKVALKLPNRRPPGLGLGATPKNPV). One can recognise a KOW 1 domain in the interval 221 to 248 (EIKVGSFIKVVDGRNKGVYGKVEGRDDD). Basic and acidic residues predominate over residues 289–305 (EYDKEKDRLETERKKLE). The segment at 289 to 337 (EYDKEKDRLETERKKLESQPPSTSTSQSSKDYKSKSSSSKHDKNSSEYE) is disordered. The segment covering 306-317 (SQPPSTSTSQSS) has biased composition (low complexity). Residues 318–337 (KDYKSKSSSSKHDKNSSEYE) show a composition bias toward basic and acidic residues. Residues 401–428 (PREIGEKLMIVAGKRSGQLAVMLDKDKR) enclose the KOW 2 domain.

The protein belongs to the MOS2 family.

The protein resides in the nucleus. This Caenorhabditis elegans protein is G-patch domain and KOW motifs-containing protein homolog 1.